The sequence spans 284 residues: RNase adapter protein RapZ (284 aa).

8–15 (GRSGSGKS) contributes to the ATP binding site. 56–59 (DVRN) provides a ligand contact to GTP. Residues 266 to 284 (RSRGKNAQSRHRTLEKSKS) are RNA-binding.

This sequence belongs to the RapZ-like family. RapZ subfamily. Homotrimer.

Its function is as follows. Modulates the synthesis of GlmS, by affecting the processing and stability of the regulatory small RNA GlmZ. When glucosamine-6-phosphate (GlcN6P) concentrations are high in the cell, RapZ binds GlmZ and targets it to cleavage by RNase E. Consequently, GlmZ is inactivated and unable to activate GlmS synthesis. Under low GlcN6P concentrations, RapZ is sequestered and inactivated by an other regulatory small RNA, GlmY, preventing GlmZ degradation and leading to synthesis of GlmS. The protein is RNase adapter protein RapZ of Sodalis glossinidius (strain morsitans).